A 183-amino-acid chain; its full sequence is Anterior gradient protein 1 (183 aa).

An N-terminal signal peptide occupies residues 1-18 (MQAGLSLVCLVLLCSALG).

Belongs to the AGR family. From stage 18 (neurula) onward, expressed in the cement gland until it degenerates. More weakly expressed in the adjacent hatching gland.

Its subcellular location is the secreted. In terms of biological role, does not appear to be required for cement gland formation. The protein is Anterior gradient protein 1 (ag1) of Xenopus laevis (African clawed frog).